Reading from the N-terminus, the 272-residue chain is Pyrroline-5-carboxylate reductase 3 (272 aa).

The protein belongs to the pyrroline-5-carboxylate reductase family.

Its subcellular location is the cytoplasm. It catalyses the reaction L-proline + NADP(+) = (S)-1-pyrroline-5-carboxylate + NADPH + 2 H(+). The catalysed reaction is L-proline + NAD(+) = (S)-1-pyrroline-5-carboxylate + NADH + 2 H(+). It functions in the pathway amino-acid biosynthesis; L-proline biosynthesis; L-proline from L-glutamate 5-semialdehyde: step 1/1. Catalyzes the reduction of 1-pyrroline-5-carboxylate (PCA) to L-proline. The polypeptide is Pyrroline-5-carboxylate reductase 3 (proG) (Bacillus subtilis (strain 168)).